We begin with the raw amino-acid sequence, 704 residues long: Cystathionine beta-synthase cbs-1 (704 aa).

Pyridoxal 5'-phosphate-binding positions include Asn454, 562–566 (GTGGT), and Ser652.

Belongs to the cysteine synthase/cystathionine beta-synthase family. In terms of assembly, monomer. As to quaternary structure, does not bind pyridoxal 5'-phosphate, PLP; which may explain why this isoform has virtually undetectable catalytic activity. Pyridoxal 5'-phosphate serves as cofactor.

It localises to the cytoplasm. It catalyses the reaction L-homocysteine + L-serine = L,L-cystathionine + H2O. It functions in the pathway amino-acid biosynthesis; L-cysteine biosynthesis; L-cysteine from L-homocysteine and L-serine: step 1/2. Its function is as follows. Hydro-lyase catalyzing the first step of the transsulfuration pathway, where the hydroxyl group of L-serine is displaced by L-homocysteine in a beta-replacement reaction to form L-cystathionine, the precursor of L-cysteine. Plays a role in maintaining homocysteine homeostasis. Involved in cold-induced somatic longevity mediated by prostaglandin E2 (PGE2) signals from adult germ cells, perhaps acting via a role in the production of hydrogen sulfide (H2S). Required for normal development. The sequence is that of Cystathionine beta-synthase cbs-1 from Caenorhabditis elegans.